Reading from the N-terminus, the 666-residue chain is Hybrid PKS-NRPS synthetase pytA (666 aa).

In terms of domain architecture, Ketosynthase family 3 (KS3) spans 1–340; it reads MDPQQRLLLE…GTNAHAILEE (340 aa). Catalysis depends on for beta-ketoacyl synthase activity residues Cys87, His222, and His260. The segment at 455-665 is malonyl-CoA:ACP transacylase (MAT) domain; sequence VFTGQGAQWF…VFVHSLVIKR (211 aa). The active-site For malonyltransferase activity is the Ser548.

The protein in the C-terminal section; belongs to the NRP synthetase family.

It functions in the pathway secondary metabolite biosynthesis. Hybrid PKS-NRPS synthetase; part of the gene cluster that mediates the biosynthesis of pyranterreones, a family of antioxidative compounds. The first step of pyranonigrins biosynthesis is performed by the hybrid PKS-NRPS synthetase pytA that condenses 4 malonyl-CoA units ato the acetyl starter unit by the modular PKS of pytA. The acyl chain is then connected to an L-serine through the amide bond by the modular NRPS of pytA. A tetramic acid is formed and released from the PKS-NRPS pytA to give pyranterreone 5 with the help of the thioesterase pytI. Pyranterreone 5 could be methylated by pytC to afford pyranterreone 6. Both pyranterreones 5 and 6 are subsequently oxidized by the FAD-linked oxidoreductase pytB and the cytochrome P450 monooxygenase pytD to form the fused gamma-pyrone core, resulting in pyranterreones 7 and 11, respectively. The hydroxy group at C-8 of pyranterreones 7 and 11 are dehydrated by the aspartyl protease pytH to form a delta-7 double bond to give pyranterreones 3 and 1, 2 accordingly. The exo-methylene of pyranterreone 3 could be reduced into a pendant methyl by reductase pytE to provide pyranterreone 4, also known as cordylactam. Pyranterreone 4 can be reconverted to pyranterreone 3 through pytB-catalyzed dehydrogenation or further oxidized to pyranterreones 9 and 10. The sequence is that of Hybrid PKS-NRPS synthetase pytA from Aspergillus terreus (strain NIH 2624 / FGSC A1156).